The following is a 281-amino-acid chain: Ribosomal protein L11 methyltransferase (281 aa).

S-adenosyl-L-methionine-binding residues include Thr133, Gly154, Asp175, and Asn216.

The protein belongs to the methyltransferase superfamily. PrmA family.

It localises to the cytoplasm. The catalysed reaction is L-lysyl-[protein] + 3 S-adenosyl-L-methionine = N(6),N(6),N(6)-trimethyl-L-lysyl-[protein] + 3 S-adenosyl-L-homocysteine + 3 H(+). Its function is as follows. Methylates ribosomal protein L11. The chain is Ribosomal protein L11 methyltransferase from Campylobacter jejuni subsp. jejuni serotype O:23/36 (strain 81-176).